Reading from the N-terminus, the 1103-residue chain is DNA polymerase delta catalytic subunit (1103 aa).

The disordered stretch occupies residues 1–29; that stretch reads MDFKRRQGPGPGVPPKRARGGLWDEDEPS. Residues 4 to 19 carry the Nuclear localization signal motif; sequence KRRQGPGPGVPPKRAR. Omega-N-methylarginine is present on arginine 19. Lysine 570 participates in a covalent cross-link: Glycyl lysine isopeptide (Lys-Gly) (interchain with G-Cter in SUMO2). Residues cysteine 1008, cysteine 1011, cysteine 1022, and cysteine 1025 each contribute to the Zn(2+) site. The CysA-type zinc finger occupies 1008–1025; sequence CIGCRSVINHQGAVCEFC. [4Fe-4S] cluster is bound by residues cysteine 1054, cysteine 1057, cysteine 1067, and cysteine 1072. The CysB motif signature appears at 1054 to 1072; the sequence is CQRCQGSLHEDVICTSRDC.

This sequence belongs to the DNA polymerase type-B family. In terms of assembly, component of the tetrameric DNA polymerase delta complex (Pol-delta4), which consists of POLD1/p125, POLD2/p50, POLD3/p66/p68 and POLD4/p12, with POLD1 bearing both DNA polymerase and 3' to 5' proofreading exonuclease activities. Within Pol-delta4, directly interacts with POLD2 and POLD4. Following genotoxic stress by DNA-damaging agents, such as ultraviolet light and methyl methanesulfonate, or by replication stress induced by treatment with hydroxyurea or aphidicolin, Pol-delta4 is converted into a trimeric form of the complex (Pol-delta3) by POLD4 degradation. Pol-delta3 is the major form at S phase replication sites and DNA damage sites. POLD1 displays different catalytic properties depending upon the complex it is found in. It exhibits higher proofreading activity and fidelity than Pol-delta4, making it particularly well suited to respond to DNA damage. Directly interacts with PCNA, as do POLD3 and POLD4; this interaction stimulates Pol-delta4 polymerase activity. As POLD2 and POLD4, directly interacts with WRNIP1; this interaction stimulates DNA polymerase delta-mediated DNA synthesis, independently of the presence of PCNA. This stimulation may be due predominantly to an increase of initiation frequency and also to increased processivity. Also observed as a dimeric complex with POLD2 (Pol-delta2). Pol-delta2 is relatively insensitive to the PCNA stimulation (2-5-fold) compared to Pol-delta4 that is stimulated by over 50-fold. The DNA polymerase delta complex interacts with POLDIP2; this interaction is probably mediated through direct binding to POLD2. Interacts with CIAO1. Interacts with POLDIP2. Interacts with RFC1. [4Fe-4S] cluster is required as a cofactor.

It is found in the nucleus. It carries out the reaction DNA(n) + a 2'-deoxyribonucleoside 5'-triphosphate = DNA(n+1) + diphosphate. Regulated by alteration of quaternary structure. Exhibits burst rates of DNA synthesis are about 5 times faster in the presence of POLD4 (Pol-delta4 complex) than in its absence (Pol-delta3 complex), while the affinity of the enzyme for its DNA and dNTP substrates appears unchanged. The Pol-delta3 complex is more likely to proofread DNA synthesis because it cleaves single-stranded DNA twice as fast and transfers mismatched DNA from the polymerase to the exonuclease sites 9 times faster compared to the Pol-delta3 complex. Pol-delta3 also extends mismatched primers 3 times more slowly in the absence of POLD4. The conversion of Pol-delta4 into Pol-delta3 is induced by genotoxic stress or by replication stress leading POLD4 degradation. Stimulated in the presence of PCNA. This stimulation is further increased in the presence of KCTD13/PDIP1, most probably via direct interaction between KCTD13 and POLD2. Functionally, as the catalytic component of the trimeric (Pol-delta3 complex) and tetrameric DNA polymerase delta complexes (Pol-delta4 complex), plays a crucial role in high fidelity genome replication, including in lagging strand synthesis, and repair. Exhibits both DNA polymerase and 3'- to 5'-exonuclease activities. Requires the presence of accessory proteins POLD2, POLD3 and POLD4 for full activity. Depending upon the absence (Pol-delta3) or the presence of POLD4 (Pol-delta4), displays differences in catalytic activity. Most notably, expresses higher proofreading activity in the context of Pol-delta3 compared with that of Pol-delta4. Although both Pol-delta3 and Pol-delta4 process Okazaki fragments in vitro, Pol-delta3 may be better suited to fulfill this task, exhibiting near-absence of strand displacement activity compared to Pol-delta4 and stalling on encounter with the 5'-blocking oligonucleotides. Pol-delta3 idling process may avoid the formation of a gap, while maintaining a nick that can be readily ligated. Along with DNA polymerase kappa, DNA polymerase delta carries out approximately half of nucleotide excision repair (NER) synthesis following UV irradiation. Under conditions of DNA replication stress, in the presence of POLD3 and POLD4, may catalyze the repair of broken replication forks through break-induced replication (BIR). Involved in the translesion synthesis (TLS) of templates carrying O6-methylguanine, 8oxoG or abasic sites. The chain is DNA polymerase delta catalytic subunit (POLD1) from Mesocricetus auratus (Golden hamster).